The chain runs to 399 residues: Elongation factor Tu (399 aa).

The tr-type G domain maps to 10-209 (KPHVNIGTIG…EVDAYIPTPK (200 aa)). The G1 stretch occupies residues 19 to 26 (GHVDHGKT). Position 19–26 (19–26 (GHVDHGKT)) interacts with GTP. Thr-26 provides a ligand contact to Mg(2+). The tract at residues 60-64 (GITIA) is G2. Residues 81-84 (DCPG) are G3. GTP contacts are provided by residues 81–85 (DCPGH) and 136–139 (NKQD). Residues 136 to 139 (NKQD) form a G4 region. Residues 174–176 (SAL) form a G5 region.

Belongs to the TRAFAC class translation factor GTPase superfamily. Classic translation factor GTPase family. EF-Tu/EF-1A subfamily. As to quaternary structure, monomer.

The protein resides in the cytoplasm. The catalysed reaction is GTP + H2O = GDP + phosphate + H(+). Functionally, GTP hydrolase that promotes the GTP-dependent binding of aminoacyl-tRNA to the A-site of ribosomes during protein biosynthesis. This chain is Elongation factor Tu, found in Helicobacter pylori (strain P12).